Reading from the N-terminus, the 117-residue chain is MNTQQLFREITQEQIKSDVPAFRPGDTVRVHVKVVEGTRERIQLFEGVVIKRHGGGISETFTVRKISYGVGVERAFPLHSPRVAQIEVVRYGKVRRAKLYYLRNLRGKAARIKEIRR.

The protein belongs to the bacterial ribosomal protein bL19 family.

Its function is as follows. This protein is located at the 30S-50S ribosomal subunit interface and may play a role in the structure and function of the aminoacyl-tRNA binding site. The chain is Large ribosomal subunit protein bL19 from Exiguobacterium sibiricum (strain DSM 17290 / CCUG 55495 / CIP 109462 / JCM 13490 / 255-15).